We begin with the raw amino-acid sequence, 260 residues long: Phosphate import ATP-binding protein PstB 1 (260 aa).

Positions 8–255 constitute an ABC transporter domain; sequence TETKNVYDVL…PEHKRTEDYV (248 aa). Residue 46–53 participates in ATP binding; it reads GPSGCGKS.

It belongs to the ABC transporter superfamily. Phosphate importer (TC 3.A.1.7) family. As to quaternary structure, the complex is composed of two ATP-binding proteins (PstB), two transmembrane proteins (PstC and PstA) and a solute-binding protein (PstS).

It localises to the cell membrane. It carries out the reaction phosphate(out) + ATP + H2O = ADP + 2 phosphate(in) + H(+). Functionally, part of the ABC transporter complex PstSACB involved in phosphate import. Responsible for energy coupling to the transport system. This chain is Phosphate import ATP-binding protein PstB 1, found in Shouchella clausii (strain KSM-K16) (Alkalihalobacillus clausii).